The sequence spans 176 residues: Adenine phosphoribosyltransferase (176 aa).

This sequence belongs to the purine/pyrimidine phosphoribosyltransferase family. Homodimer.

It is found in the cytoplasm. It carries out the reaction AMP + diphosphate = 5-phospho-alpha-D-ribose 1-diphosphate + adenine. The protein operates within purine metabolism; AMP biosynthesis via salvage pathway; AMP from adenine: step 1/1. Functionally, catalyzes a salvage reaction resulting in the formation of AMP, that is energically less costly than de novo synthesis. The chain is Adenine phosphoribosyltransferase from Thermobifida fusca (strain YX).